The chain runs to 149 residues: Large ribosomal subunit protein bL9 (149 aa).

This sequence belongs to the bacterial ribosomal protein bL9 family.

In terms of biological role, binds to the 23S rRNA. This is Large ribosomal subunit protein bL9 from Christiangramia forsetii (strain DSM 17595 / CGMCC 1.15422 / KT0803) (Gramella forsetii).